An 871-amino-acid polypeptide reads, in one-letter code: Translation initiation factor IF-2 (871 aa).

Disordered stretches follow at residues Lys60–Lys101 and Glu184–Ser203. Positions Lys61–Lys72 are enriched in basic residues. A compositionally biased stretch (basic and acidic residues) spans Lys73–Lys101. Positions Thr370 to Glu537 constitute a tr-type G domain. A G1 region spans residues Gly379–Thr386. Gly379–Thr386 contacts GTP. Residues Gly404–His408 form a G2 region. Residues Asp425–Gly428 are G3. Residues Asp425 to His429 and Asn479 to Asp482 contribute to the GTP site. Residues Asn479–Asp482 form a G4 region. Positions Ser515–Lys517 are G5.

It belongs to the TRAFAC class translation factor GTPase superfamily. Classic translation factor GTPase family. IF-2 subfamily.

Its subcellular location is the cytoplasm. One of the essential components for the initiation of protein synthesis. Protects formylmethionyl-tRNA from spontaneous hydrolysis and promotes its binding to the 30S ribosomal subunits. Also involved in the hydrolysis of GTP during the formation of the 70S ribosomal complex. This chain is Translation initiation factor IF-2, found in Campylobacter jejuni (strain RM1221).